A 508-amino-acid polypeptide reads, in one-letter code: Cytochrome P450 monooxygenase orf4 (508 aa).

Cysteine 447 serves as a coordination point for heme.

It belongs to the cytochrome P450 family. The cofactor is heme.

It functions in the pathway mycotoxin biosynthesis. In terms of biological role, cytochrome P450 monooxygenase; part of the gene cluster that mediates the biosynthesis of brefeldin A (BFA), a protein transport inhibitor that shows antiviral, antifungal, and antitumor properties. The proposed biosynthesis of BFA involves formation of an acyclic polyketide chain that is differentially tailored throughout the backbone. The highly reducing polyketide synthase Bref-PKS is proposed to synthesize the precisely reduced octaketide precursor, which could then be directly offloaded by the thiohydrolase enzyme Bref-TH followed by a cytochrome P450 monooxygenase-mediated formation of the cyclopentane ring and macrocyclization to afford 7-deoxy BFA. Alternatively, the first ring annulation can also occur on the ACP-tethered intermediate before the thiohydrolase release and lactonization. The C7-hydroxylation by another cytochrome P450 monooxygenase is believed to be the final step in the process to obtain the final structure of BFA. In addition to the HRPKS Bref-PKS and the thiohydrolase Bref-TH, the brefeldin A biosynthesis cluster contains 4 cytochrome p450 monooxygenases (called orf3 to orf6), as well a the probable cluster-specific transcription regulator orf8. The sequence is that of Cytochrome P450 monooxygenase orf4 from Eupenicillium brefeldianum (Penicillium brefeldianum).